A 273-amino-acid chain; its full sequence is Holocytochrome c-type synthase (273 aa).

Positions 1-18 (MGLSASSPAATAQSAAEP) are enriched in low complexity. Residues 1-39 (MGLSASSPAATAQSAAEPSKQHQVASPPSECPMHQEKMR) are disordered. 2 HRM repeats span residues 30–35 (ECPMHQ) and 40–45 (GCPMHM).

It belongs to the cytochrome c-type heme lyase family.

It localises to the mitochondrion inner membrane. It carries out the reaction holo-[cytochrome c] = apo-[cytochrome c] + heme b. In terms of biological role, lyase that catalyzes the covalent linking of the heme group to the cytochrome C apoprotein to produce the mature functional cytochrome. The protein is Holocytochrome c-type synthase (HCCS) of Gallus gallus (Chicken).